A 331-amino-acid polypeptide reads, in one-letter code: Pectinesterase (331 aa).

Residues 1 to 17 (MVKSILASVLFAATALA) form the signal peptide. Residue Q138 coordinates substrate. D161 (proton donor) is an active-site residue. D182 acts as the Nucleophile in catalysis. 2 residues coordinate substrate: R247 and W249.

Belongs to the pectinesterase family.

The protein resides in the secreted. It catalyses the reaction [(1-&gt;4)-alpha-D-galacturonosyl methyl ester](n) + n H2O = [(1-&gt;4)-alpha-D-galacturonosyl](n) + n methanol + n H(+). The protein operates within glycan metabolism; pectin degradation; 2-dehydro-3-deoxy-D-gluconate from pectin: step 1/5. Functionally, involved in maceration and soft-rotting of plant tissue. This Aspergillus niger protein is Pectinesterase (pme1).